The sequence spans 456 residues: Chromosomal replication initiator protein DnaA 1 (456 aa).

Positions 1–68 (MRAWEEFLLL…KANLINNNGK (68 aa)) are domain I, interacts with DnaA modulators. Positions 68 to 101 (KPIRVRVTSLDKSTPFKESQIQQEKTAYFTMQYG) are domain II. Residues 102-320 (DIDPQMSFAN…HALTTLAKRV (219 aa)) are domain III, AAA+ region. The ATP site is built by Ser150, Gly152, Lys153, and Thr154. The tract at residues 321 to 456 (AYKKLSHQLL…AYQSLDLIVD (136 aa)) is domain IV, binds dsDNA.

This sequence belongs to the DnaA family. As to quaternary structure, oligomerizes as a right-handed, spiral filament on DNA at oriC.

It is found in the cytoplasm. Its function is as follows. Plays an essential role in the initiation and regulation of chromosomal replication. ATP-DnaA binds to the origin of replication (oriC) to initiate formation of the DNA replication initiation complex once per cell cycle. Binds the DnaA box (a 9 base pair repeat at the origin) and separates the double-stranded (ds)DNA. Forms a right-handed helical filament on oriC DNA; dsDNA binds to the exterior of the filament while single-stranded (ss)DNA is stabiized in the filament's interior. The ATP-DnaA-oriC complex binds and stabilizes one strand of the AT-rich DNA unwinding element (DUE), permitting loading of DNA polymerase. After initiation quickly degrades to an ADP-DnaA complex that is not apt for DNA replication. Binds acidic phospholipids. This is Chromosomal replication initiator protein DnaA 1 from Chlamydia muridarum (strain MoPn / Nigg).